The sequence spans 832 residues: Protein P (832 aa).

The interval 1–177 (MPLSCPHFRK…FCGSPYSWEQ (177 aa)) is terminal protein domain (TP). The tract at residues 178-335 (ELQHGAEPVC…YCLSHLVNLL (158 aa)) is spacer. The segment covering 208–224 (KQSRLGLQSQQRQLARS) has biased composition (low complexity). Positions 208–241 (KQSRLGLQSQQRQLARSHQGRSGSIRARVHSTTR) are disordered. The segment at 336-679 (EDWGPCTEHG…YLTLYPVARQ (344 aa)) is polymerase/reverse transcriptase domain (RT). The Reverse transcriptase domain maps to 346–589 (EHHIRIPRTP…YSLNFMGYII (244 aa)). 3 residues coordinate Mg(2+): D418, D540, and D541.

The protein belongs to the hepadnaviridae P protein family.

The enzyme catalyses DNA(n) + a 2'-deoxyribonucleoside 5'-triphosphate = DNA(n+1) + diphosphate. It carries out the reaction Endonucleolytic cleavage to 5'-phosphomonoester.. Activated by host HSP70 and HSP40 in vitro to be able to bind the epsilon loop of the pgRNA. Because deletion of the RNase H region renders the protein partly chaperone-independent, the chaperones may be needed indirectly to relieve occlusion of the RNA-binding site by this domain. Inhibited by several reverse-transcriptase inhibitors: Lamivudine, Adefovir and Entecavir. Its function is as follows. Multifunctional enzyme that converts the viral RNA genome into dsDNA in viral cytoplasmic capsids. This enzyme displays a DNA polymerase activity that can copy either DNA or RNA templates, and a ribonuclease H (RNase H) activity that cleaves the RNA strand of RNA-DNA heteroduplexes in a partially processive 3'- to 5'-endonucleasic mode. Neo-synthesized pregenomic RNA (pgRNA) are encapsidated together with the P protein, and reverse-transcribed inside the nucleocapsid. Initiation of reverse-transcription occurs first by binding the epsilon loop on the pgRNA genome, and is initiated by protein priming, thereby the 5'-end of (-)DNA is covalently linked to P protein. Partial (+)DNA is synthesized from the (-)DNA template and generates the relaxed circular DNA (RC-DNA) genome. After budding and infection, the RC-DNA migrates in the nucleus, and is converted into a plasmid-like covalently closed circular DNA (cccDNA). The activity of P protein does not seem to be necessary for cccDNA generation, and is presumably released from (+)DNA by host nuclear DNA repair machinery. This is Protein P from Gibbon hepatitis B virus subtype ayw3q (isolate Hope) (HBVgbn).